A 231-amino-acid chain; its full sequence is Putative carboxymethylenebutenolidase (231 aa).

Active-site residues include D169 and H200.

This sequence belongs to the dienelactone hydrolase family.

The catalysed reaction is 2-(5-oxo-2,5-dihydrofuran-2-ylidene)acetate + H2O = 4-oxohex-2-enedioate + H(+). The protein is Putative carboxymethylenebutenolidase of Azospirillum brasilense.